Reading from the N-terminus, the 467-residue chain is 26S proteasome regulatory subunit 7 homolog (467 aa).

Disordered regions lie at residues 1–26 and 108–140; these read MPPKEDWEKYKAPLEDDDKKPDDDKI and GNGESDETTTDNNNSGNSNSNSNQQSTDADEDD. The segment covering 117–134 has biased composition (low complexity); that stretch reads TDNNNSGNSNSNSNQQST. A phosphoserine mark is found at S164 and S231. 250–257 is an ATP binding site; sequence GPPGTGKT.

Belongs to the AAA ATPase family. As to quaternary structure, interacts with UBR1 and CIC1. In terms of processing, the N-terminus is blocked.

It localises to the cytoplasm. The protein localises to the nucleus. Its function is as follows. The 26S proteasome is involved in the ATP-dependent degradation of ubiquitinated proteins. The regulatory (or ATPase) complex confers ATP dependency and substrate specificity to the 26S complex. This Saccharomyces cerevisiae (strain ATCC 204508 / S288c) (Baker's yeast) protein is 26S proteasome regulatory subunit 7 homolog (RPT1).